Here is a 687-residue protein sequence, read N- to C-terminus: Glycine--tRNA ligase beta subunit (687 aa).

It belongs to the class-II aminoacyl-tRNA synthetase family. In terms of assembly, tetramer of two alpha and two beta subunits.

The protein resides in the cytoplasm. The catalysed reaction is tRNA(Gly) + glycine + ATP = glycyl-tRNA(Gly) + AMP + diphosphate. The chain is Glycine--tRNA ligase beta subunit from Neisseria meningitidis serogroup C / serotype 2a (strain ATCC 700532 / DSM 15464 / FAM18).